The chain runs to 181 residues: ATP synthase subunit b (181 aa).

The helical transmembrane segment at 24-44 (LFPNLPNFIAHLLATIVLVIV) threads the bilayer.

This sequence belongs to the ATPase B chain family. As to quaternary structure, F-type ATPases have 2 components, F(1) - the catalytic core - and F(0) - the membrane proton channel. F(1) has five subunits: alpha(3), beta(3), gamma(1), delta(1), epsilon(1). F(0) has three main subunits: a(1), b(2) and c(10-14). The alpha and beta chains form an alternating ring which encloses part of the gamma chain. F(1) is attached to F(0) by a central stalk formed by the gamma and epsilon chains, while a peripheral stalk is formed by the delta and b chains.

It localises to the cell membrane. Functionally, f(1)F(0) ATP synthase produces ATP from ADP in the presence of a proton or sodium gradient. F-type ATPases consist of two structural domains, F(1) containing the extramembraneous catalytic core and F(0) containing the membrane proton channel, linked together by a central stalk and a peripheral stalk. During catalysis, ATP synthesis in the catalytic domain of F(1) is coupled via a rotary mechanism of the central stalk subunits to proton translocation. Its function is as follows. Component of the F(0) channel, it forms part of the peripheral stalk, linking F(1) to F(0). In Mycoplasma capricolum subsp. capricolum (strain California kid / ATCC 27343 / NCTC 10154), this protein is ATP synthase subunit b.